A 396-amino-acid polypeptide reads, in one-letter code: L-lactate dehydrogenase (396 aa).

The FMN hydroxy acid dehydrogenase domain maps to 1-380; sequence MIISAASDYR…TQDSLVQGLG (380 aa). Residue Tyr-24 participates in substrate binding. FMN-binding residues include Ser-106 and Gln-127. Position 129 (Tyr-129) interacts with substrate. Residue Thr-155 participates in FMN binding. Arg-164 is a binding site for substrate. Lys-251 is a binding site for FMN. The Proton acceptor role is filled by His-275. Arg-278 lines the substrate pocket. An FMN-binding site is contributed by 306–330; the sequence is DSGIRNGLDVVRMIALGADTVLLGR.

This sequence belongs to the FMN-dependent alpha-hydroxy acid dehydrogenase family. The cofactor is FMN.

Its subcellular location is the cell inner membrane. The enzyme catalyses (S)-lactate + A = pyruvate + AH2. In terms of biological role, catalyzes the conversion of L-lactate to pyruvate. Is coupled to the respiratory chain. This Escherichia coli O7:K1 (strain IAI39 / ExPEC) protein is L-lactate dehydrogenase.